A 229-amino-acid chain; its full sequence is GTP:AMP phosphotransferase (229 aa).

10–15 (GVGKGT) lines the a ribonucleoside 5'-triphosphate pocket. Residues 30–59 (NVGNILRNEIKKESNIGKEVQNVVRSGNLV) are NMP. AMP-binding positions include Arg36, 57–59 (NLV), Gly87, 87–90 (GFPR), and Gln94. The interval 123 to 170 (GRRICNICDKNFNVSNIQQDSFDMPPILPSKDCIQCNGHTNLIKRKDD) is LID. Arg178 lines the AMP pocket.

It belongs to the adenylate kinase family.

Its subcellular location is the mitochondrion. The enzyme catalyses a ribonucleoside 5'-triphosphate + AMP = a ribonucleoside 5'-diphosphate + ADP. It catalyses the reaction GTP + AMP = GDP + ADP. Its activity is regulated as follows. Inhibited by the dinucleoside pentaphosphate compound P1,P5-di(guanosine-5') pentaphosphate (GP5A). Its function is as follows. Catalyzes the reversible transfer of the terminal phosphate group between GTP and AMP. Has very low activity with UTP, ITP, CTP and IMP and no activity with ATP, GMP, CMP and UMP in vitro. This Plasmodium falciparum (isolate 3D7) protein is GTP:AMP phosphotransferase.